We begin with the raw amino-acid sequence, 416 residues long: Calreticulin (416 aa).

Positions 1-27 are cleaved as a signal peptide; that stretch reads MATQRRANPSSLHLITVFSLLVAVVSA. The N-linked (GlcNAc...) asparagine glycan is linked to Asn59. Cys113 and Cys145 are oxidised to a cystine. Residues Tyr117, Lys119, Tyr136, and Asp143 each coordinate an alpha-D-glucoside. Asn159 is a glycosylation site (N-linked (GlcNAc...) asparagine). 7 tandem repeats follow at residues 199–210, 218–229, 235–246, 253–264, 268–278, 282–292, and 296–306. The 4 X approximate repeats stretch occupies residues 199–264; that stretch reads KQSGSLYSDW…DAKKPEDWDD (66 aa). A compositionally biased stretch (basic and acidic residues) spans 215–225; that stretch reads TIKDPSAKKPE. Residues 215–286 are disordered; it reads TIKDPSAKKP…NPEYKGPWKP (72 aa). Acidic residues-rich tracts occupy residues 226–236 and 244–253; these read DWDEKEFIDDP and YDDIPEEITD. The 3 X approximate repeats stretch occupies residues 268–306; sequence GEWTAPTIPNPEYKGPWKPKKIKNPNYKGKWKAPLIDNP. Glu326 contributes to the an alpha-D-glucoside binding site. Over residues 355 to 380 the composition is skewed to basic and acidic residues; the sequence is TWGKQKDAEKAAFEEAEKKREEEESK. The disordered stretch occupies residues 355 to 416; sequence TWGKQKDAEK…SKDDEAHDEL (62 aa). Residues 386 to 403 show a composition bias toward acidic residues; it reads SDAEEDDDADDDSDDADD. Residues 404–416 show a composition bias toward basic and acidic residues; that stretch reads KSESKDDEAHDEL. The Prevents secretion from ER motif lies at 413–416; the sequence is HDEL.

The protein belongs to the calreticulin family.

It localises to the endoplasmic reticulum lumen. In terms of biological role, molecular calcium-binding chaperone promoting folding, oligomeric assembly and quality control in the ER via the calreticulin/calnexin cycle. This lectin may interact transiently with almost all of the monoglucosylated glycoproteins that are synthesized in the ER. In Nicotiana plumbaginifolia (Leadwort-leaved tobacco), this protein is Calreticulin (CAL1).